Here is a 156-residue protein sequence, read N- to C-terminus: Ribonuclease H (156 aa).

The RNase H type-1 domain maps to 3–144; the sequence is ELKQIRIYTD…CDTLAREAAE (142 aa). Positions 12, 50, 72, and 136 each coordinate Mg(2+).

This sequence belongs to the RNase H family. As to quaternary structure, monomer. It depends on Mg(2+) as a cofactor.

The protein resides in the cytoplasm. The enzyme catalyses Endonucleolytic cleavage to 5'-phosphomonoester.. Functionally, endonuclease that specifically degrades the RNA of RNA-DNA hybrids. This chain is Ribonuclease H, found in Shewanella amazonensis (strain ATCC BAA-1098 / SB2B).